Here is a 146-residue protein sequence, read N- to C-terminus: Large ribosomal subunit protein uL15 (146 aa).

The tract at residues 1 to 65 (MSDIQLNTLK…GQMPLQRRLP (65 aa)) is disordered. The segment covering 24–34 (RGIGSGLGKTA) has biased composition (gly residues).

This sequence belongs to the universal ribosomal protein uL15 family. In terms of assembly, part of the 50S ribosomal subunit.

Its function is as follows. Binds to the 23S rRNA. The protein is Large ribosomal subunit protein uL15 of Bordetella petrii (strain ATCC BAA-461 / DSM 12804 / CCUG 43448).